The following is a 244-amino-acid chain: tRNA (guanine-N(7)-)-methyltransferase (244 aa).

Polar residues predominate over residues 1 to 10 (MSDTPQSPAQ). Positions 1–20 (MSDTPQSPAQDSLAEHDEAR) are disordered. S-adenosyl-L-methionine contacts are provided by glutamate 74, glutamate 99, aspartate 126, and aspartate 149. The active site involves aspartate 149. Substrate is bound by residues lysine 153, aspartate 185, and 222 to 225 (TKFE).

The protein belongs to the class I-like SAM-binding methyltransferase superfamily. TrmB family.

The enzyme catalyses guanosine(46) in tRNA + S-adenosyl-L-methionine = N(7)-methylguanosine(46) in tRNA + S-adenosyl-L-homocysteine. It participates in tRNA modification; N(7)-methylguanine-tRNA biosynthesis. Functionally, catalyzes the formation of N(7)-methylguanine at position 46 (m7G46) in tRNA. This is tRNA (guanine-N(7)-)-methyltransferase from Pseudomonas aeruginosa (strain ATCC 15692 / DSM 22644 / CIP 104116 / JCM 14847 / LMG 12228 / 1C / PRS 101 / PAO1).